A 200-amino-acid chain; its full sequence is Holliday junction resolvase RecU (200 aa).

The disordered stretch occupies residues 1–25; that stretch reads MTIRYPNGKRYNQASQPHKTPIKKH. Thr85, Asp87, Glu100, and Gln119 together coordinate Mg(2+).

It belongs to the RecU family. Mg(2+) serves as cofactor.

It localises to the cytoplasm. The catalysed reaction is Endonucleolytic cleavage at a junction such as a reciprocal single-stranded crossover between two homologous DNA duplexes (Holliday junction).. Functionally, endonuclease that resolves Holliday junction intermediates in genetic recombination. Cleaves mobile four-strand junctions by introducing symmetrical nicks in paired strands. Promotes annealing of linear ssDNA with homologous dsDNA. Required for DNA repair, homologous recombination and chromosome segregation. The sequence is that of Holliday junction resolvase RecU from Bacillus thuringiensis (strain Al Hakam).